We begin with the raw amino-acid sequence, 341 residues long: Nicotinate-nucleotide--dimethylbenzimidazole phosphoribosyltransferase (341 aa).

The active-site Proton acceptor is Glu-310.

The protein belongs to the CobT family.

It catalyses the reaction 5,6-dimethylbenzimidazole + nicotinate beta-D-ribonucleotide = alpha-ribazole 5'-phosphate + nicotinate + H(+). Its pathway is nucleoside biosynthesis; alpha-ribazole biosynthesis; alpha-ribazole from 5,6-dimethylbenzimidazole: step 1/2. Catalyzes the synthesis of alpha-ribazole-5'-phosphate from nicotinate mononucleotide (NAMN) and 5,6-dimethylbenzimidazole (DMB). The protein is Nicotinate-nucleotide--dimethylbenzimidazole phosphoribosyltransferase of Vibrio cholerae serotype O1 (strain ATCC 39315 / El Tor Inaba N16961).